The chain runs to 379 residues: SUN domain-containing protein 5 (379 aa).

Residues 1–45 form a disordered region; that stretch reads MPRSSRSPGDPGALLEDVAHNPRPRRIAQRGRNTSRMAEDTSPNM. Over 1–105 the chain is Nuclear; sequence MPRSSRSPGD…LLCQKLMEKT (105 aa). Residues 31–45 are compositionally biased toward polar residues; that stretch reads GRNTSRMAEDTSPNM. The chain crosses the membrane as a helical span at residues 106 to 122; that stretch reads GILLLCAFGFWMFSIHL. The Perinuclear space segment spans residues 123–379; that stretch reads PSKMKVWQDD…PHQNPYPKRD (257 aa). Positions 141 to 182 form a coiled coil; sequence LRLYQEKVRHHSGEIQDLRGSMNQLIAKLQEMEAMSDEQKMA. In terms of domain architecture, SUN spans 205–364; it reads GASIDFEHTS…YRVRVHGSVA (160 aa).

In terms of assembly, probable homotrimer. Interacts with DNAJB13. Highly glycosylated in the Golgi apparatus during spermiogenesis. Sperm (at protein level). Widely expressed. Conflictingly shown to be specifically expressed in testis.

The protein localises to the nucleus inner membrane. It localises to the golgi apparatus. Its function is as follows. Plays an essential role in anchoring sperm head to the tail. Is responsible for the attachment of the coupling apparatus to the sperm nuclear envelope. In Homo sapiens (Human), this protein is SUN domain-containing protein 5 (SUN5).